Consider the following 547-residue polypeptide: Oncoprotein-induced transcript 3 protein (547 aa).

The first 19 residues, 1 to 19, serve as a signal peptide directing secretion; it reads MPQLLLLACLLIIVTRVAP. Asn89 and Asn116 each carry an N-linked (GlcNAc...) asparagine glycan. An EGF-like; calcium-binding domain is found at 182–222; sequence DENECEQNNGGCSEICVNLKNSYRCECGIGRVLRSDGKTCE. Disulfide bonds link Cys186/Cys197, Cys193/Cys206, and Cys208/Cys221. One can recognise a ZP domain in the interval 267–516; it reads FCKSNTIEVS…SRCAQGCHRR (250 aa). Asn299 carries an N-linked (GlcNAc...) asparagine glycan. The interval 520 to 547 is disordered; the sequence is EASTEGEDASGPRSQMLTGGPISIDWED.

It is found in the nucleus envelope. Its function is as follows. May be involved in hepatocellular function and development. This chain is Oncoprotein-induced transcript 3 protein (OIT3), found in Bos taurus (Bovine).